The chain runs to 406 residues: O-succinylhomoserine sulfhydrylase (406 aa).

Lys219 bears the N6-(pyridoxal phosphate)lysine mark.

The protein belongs to the trans-sulfuration enzymes family. MetZ subfamily. In terms of assembly, homotetramer. Requires pyridoxal 5'-phosphate as cofactor.

It catalyses the reaction O-succinyl-L-homoserine + hydrogen sulfide = L-homocysteine + succinate. It participates in amino-acid biosynthesis; L-methionine biosynthesis via de novo pathway; L-homocysteine from O-succinyl-L-homoserine: step 1/1. Catalyzes the formation of L-homocysteine from O-succinyl-L-homoserine (OSHS) and hydrogen sulfide. The sequence is that of O-succinylhomoserine sulfhydrylase from Mycobacterium tuberculosis (strain CDC 1551 / Oshkosh).